A 270-amino-acid chain; its full sequence is ES1 protein, mitochondrial (270 aa).

Expressed specifically in the inner segments of cone photoreceptor cells of the retina (at protein level).

It is found in the mitochondrion. In terms of biological role, plays a role in promoting mitochondrial enlargement in cone photoreceptor cells in a fusion-independent and ATP-dependent manner. The sequence is that of ES1 protein, mitochondrial from Danio rerio (Zebrafish).